Consider the following 2287-residue polypeptide: Protein Ycf2 (2287 aa).

1641–1648 (GSIGTGRS) provides a ligand contact to ATP.

It belongs to the Ycf2 family.

The protein localises to the plastid. It localises to the chloroplast stroma. Functionally, probable ATPase of unknown function. Its presence in a non-photosynthetic plant (Epifagus virginiana) and experiments in tobacco indicate that it has an essential function which is probably not related to photosynthesis. The sequence is that of Protein Ycf2 from Lepidium virginicum (Virginia pepperweed).